The chain runs to 168 residues: Photosystem I assembly protein Ycf3 (168 aa).

TPR repeat units follow at residues 35 to 68, 72 to 105, and 120 to 153; these read AFTY…EIDP, SYIL…NPFL, and GEQA…TPGN.

The protein belongs to the Ycf3 family.

It localises to the plastid. The protein localises to the chloroplast thylakoid membrane. Functionally, essential for the assembly of the photosystem I (PSI) complex. May act as a chaperone-like factor to guide the assembly of the PSI subunits. The sequence is that of Photosystem I assembly protein Ycf3 from Nicotiana sylvestris (Wood tobacco).